The sequence spans 293 residues: 4-hydroxy-tetrahydrodipicolinate synthase (293 aa).

T45 provides a ligand contact to pyruvate. Catalysis depends on Y133, which acts as the Proton donor/acceptor. K162 (schiff-base intermediate with substrate) is an active-site residue. Residue I204 participates in pyruvate binding.

The protein belongs to the DapA family. In terms of assembly, homotetramer; dimer of dimers.

It localises to the cytoplasm. The catalysed reaction is L-aspartate 4-semialdehyde + pyruvate = (2S,4S)-4-hydroxy-2,3,4,5-tetrahydrodipicolinate + H2O + H(+). It participates in amino-acid biosynthesis; L-lysine biosynthesis via DAP pathway; (S)-tetrahydrodipicolinate from L-aspartate: step 3/4. Catalyzes the condensation of (S)-aspartate-beta-semialdehyde [(S)-ASA] and pyruvate to 4-hydroxy-tetrahydrodipicolinate (HTPA). In Mesorhizobium japonicum (strain LMG 29417 / CECT 9101 / MAFF 303099) (Mesorhizobium loti (strain MAFF 303099)), this protein is 4-hydroxy-tetrahydrodipicolinate synthase.